The following is a 76-amino-acid chain: Small ribosomal subunit protein bS18 (76 aa).

It belongs to the bacterial ribosomal protein bS18 family. Part of the 30S ribosomal subunit. Forms a tight heterodimer with protein bS6.

Binds as a heterodimer with protein bS6 to the central domain of the 16S rRNA, where it helps stabilize the platform of the 30S subunit. The sequence is that of Small ribosomal subunit protein bS18 from Mesoplasma florum (strain ATCC 33453 / NBRC 100688 / NCTC 11704 / L1) (Acholeplasma florum).